The primary structure comprises 119 residues: Dihydroneopterin aldolase (119 aa).

Substrate-binding positions include glutamate 21, tyrosine 53, and 72–73 (IE). Lysine 99 (proton donor/acceptor) is an active-site residue.

The protein belongs to the DHNA family.

It catalyses the reaction 7,8-dihydroneopterin = 6-hydroxymethyl-7,8-dihydropterin + glycolaldehyde. The protein operates within cofactor biosynthesis; tetrahydrofolate biosynthesis; 2-amino-4-hydroxy-6-hydroxymethyl-7,8-dihydropteridine diphosphate from 7,8-dihydroneopterin triphosphate: step 3/4. Catalyzes the conversion of 7,8-dihydroneopterin to 6-hydroxymethyl-7,8-dihydropterin. The sequence is that of Dihydroneopterin aldolase (folB) from Streptococcus pyogenes serotype M3 (strain ATCC BAA-595 / MGAS315).